The sequence spans 137 residues: Transcription antitermination protein NusB (137 aa).

Belongs to the NusB family.

In terms of biological role, involved in transcription antitermination. Required for transcription of ribosomal RNA (rRNA) genes. Binds specifically to the boxA antiterminator sequence of the ribosomal RNA (rrn) operons. The chain is Transcription antitermination protein NusB from Aeromonas hydrophila subsp. hydrophila (strain ATCC 7966 / DSM 30187 / BCRC 13018 / CCUG 14551 / JCM 1027 / KCTC 2358 / NCIMB 9240 / NCTC 8049).